Reading from the N-terminus, the 460-residue chain is Bifunctional protein GlmU (460 aa).

The segment at 1–229 (MTNYAIILAA…FNESLGVNDR (229 aa)) is pyrophosphorylase. UDP-N-acetyl-alpha-D-glucosamine is bound by residues 8 to 11 (LAAG), Lys22, Gln72, and 77 to 78 (GT). Position 102 (Asp102) interacts with Mg(2+). Residues Gly139, Glu154, Asn169, and Asn227 each contribute to the UDP-N-acetyl-alpha-D-glucosamine site. Asn227 contributes to the Mg(2+) binding site. Positions 230 to 250 (VALATAETVMRQRITQKHMVN) are linker. Residues 251–460 (GVTFQNPETV…RLAHHPSRSK (210 aa)) form an N-acetyltransferase region. UDP-N-acetyl-alpha-D-glucosamine-binding residues include Arg332 and Lys350. His362 serves as the catalytic Proton acceptor. The UDP-N-acetyl-alpha-D-glucosamine site is built by Tyr365 and Asn376. Acetyl-CoA contacts are provided by residues Ala379, 385–386 (NY), Ser404, Ala422, and Arg439.

The protein in the N-terminal section; belongs to the N-acetylglucosamine-1-phosphate uridyltransferase family. This sequence in the C-terminal section; belongs to the transferase hexapeptide repeat family. In terms of assembly, homotrimer. The cofactor is Mg(2+).

Its subcellular location is the cytoplasm. The catalysed reaction is alpha-D-glucosamine 1-phosphate + acetyl-CoA = N-acetyl-alpha-D-glucosamine 1-phosphate + CoA + H(+). The enzyme catalyses N-acetyl-alpha-D-glucosamine 1-phosphate + UTP + H(+) = UDP-N-acetyl-alpha-D-glucosamine + diphosphate. It functions in the pathway nucleotide-sugar biosynthesis; UDP-N-acetyl-alpha-D-glucosamine biosynthesis; N-acetyl-alpha-D-glucosamine 1-phosphate from alpha-D-glucosamine 6-phosphate (route II): step 2/2. Its pathway is nucleotide-sugar biosynthesis; UDP-N-acetyl-alpha-D-glucosamine biosynthesis; UDP-N-acetyl-alpha-D-glucosamine from N-acetyl-alpha-D-glucosamine 1-phosphate: step 1/1. It participates in bacterial outer membrane biogenesis; LPS lipid A biosynthesis. Its function is as follows. Catalyzes the last two sequential reactions in the de novo biosynthetic pathway for UDP-N-acetylglucosamine (UDP-GlcNAc). The C-terminal domain catalyzes the transfer of acetyl group from acetyl coenzyme A to glucosamine-1-phosphate (GlcN-1-P) to produce N-acetylglucosamine-1-phosphate (GlcNAc-1-P), which is converted into UDP-GlcNAc by the transfer of uridine 5-monophosphate (from uridine 5-triphosphate), a reaction catalyzed by the N-terminal domain. The chain is Bifunctional protein GlmU from Streptococcus pyogenes serotype M6 (strain ATCC BAA-946 / MGAS10394).